Consider the following 212-residue polypeptide: Kynurenine formamidase (212 aa).

Residue Trp-18 coordinates substrate. Residues His-48, His-52, and Asp-54 each contribute to the Zn(2+) site. The active-site Proton donor/acceptor is the His-58. Residues His-160 and Glu-172 each coordinate Zn(2+).

Belongs to the Cyclase 1 superfamily. KynB family. As to quaternary structure, homodimer. Zn(2+) is required as a cofactor.

The catalysed reaction is N-formyl-L-kynurenine + H2O = L-kynurenine + formate + H(+). Its pathway is amino-acid degradation; L-tryptophan degradation via kynurenine pathway; L-kynurenine from L-tryptophan: step 2/2. Its function is as follows. Catalyzes the hydrolysis of N-formyl-L-kynurenine to L-kynurenine, the second step in the kynurenine pathway of tryptophan degradation. The protein is Kynurenine formamidase of Paraburkholderia xenovorans (strain LB400).